The sequence spans 394 residues: Xylose isomerase (394 aa).

Catalysis depends on residues H54 and D57. 7 residues coordinate Mg(2+): E180, E216, H219, D244, D254, D256, and D285. The disordered stretch occupies residues 370–394; it reads VRTPRPAGDGPPAGRARLTVAPRKR. Low complexity predominate over residues 373 to 386; that stretch reads PRPAGDGPPAGRAR.

The protein belongs to the xylose isomerase family. As to quaternary structure, homotetramer. Requires Mg(2+) as cofactor.

Its subcellular location is the cytoplasm. It carries out the reaction alpha-D-xylose = alpha-D-xylulofuranose. Its function is as follows. Involved in D-xylose catabolism. The sequence is that of Xylose isomerase (xylA) from Streptomyces rochei (Streptomyces parvullus).